The primary structure comprises 431 residues: MSKIVKVIGREIIDSRGNPTVEAEVHLEGGFVGLAAAPSGASTGSREALELRDGDKSRFLGKGVLKAVAAVNGPIAQAVIGKDAKDQANIDKIMIDLDGTENKSQFGANAILAVSLAAAKAAAASKGMPLYEHIAELNGTPGKFSMPLPMMNIINGGEHADNNVDIQEFMIQPVGAKTLKEAVRIGSEVFHHLAKVLKAKGLNTAVGDEGGYAPNLGSNAEALAVIAEAVKAAGYELGKDVTLAMDCAASEFYKDGKYVLAGEGNKAFTSEEFTHFLEDLTKQYPIVSIEDGLDESDWAGFKYQTEVLGDKIQLVGDDLFVTNTKILKEGIEKGVANSILIKFNQIGSLTETLAAIKMAKDAGYTAVISHRSGETEDATIADLAVGTAAGQIKTGSMSRSDRVAKYNQLIRIEEALGDRAPFNGLKEVKGQ.

Q167 contacts (2R)-2-phosphoglycerate. E209 acts as the Proton donor in catalysis. Mg(2+) contacts are provided by D246, E290, and D317. K342, R371, S372, and K393 together coordinate (2R)-2-phosphoglycerate. K342 (proton acceptor) is an active-site residue.

The protein belongs to the enolase family. As to quaternary structure, component of the RNA degradosome, a multiprotein complex involved in RNA processing and mRNA degradation. The cofactor is Mg(2+).

It is found in the cytoplasm. It localises to the secreted. The protein resides in the cell surface. It catalyses the reaction (2R)-2-phosphoglycerate = phosphoenolpyruvate + H2O. Its pathway is carbohydrate degradation; glycolysis; pyruvate from D-glyceraldehyde 3-phosphate: step 4/5. Its function is as follows. Catalyzes the reversible conversion of 2-phosphoglycerate (2-PG) into phosphoenolpyruvate (PEP). It is essential for the degradation of carbohydrates via glycolysis. This chain is Enolase, found in Yersinia pseudotuberculosis serotype O:1b (strain IP 31758).